The primary structure comprises 369 residues: Maltose/maltodextrin import ATP-binding protein MalK (369 aa).

The ABC transporter domain maps to 4 to 234 (VTLSSVYKAF…PANRFVAGFI (231 aa)). 36-43 (GPSGCGKS) is a binding site for ATP.

Belongs to the ABC transporter superfamily. Maltooligosaccharide importer (TC 3.A.1.1.1) family. The complex is composed of two ATP-binding proteins (MalK), two transmembrane proteins (MalG and MalK) and a solute-binding protein (MalE).

The protein localises to the cell inner membrane. It catalyses the reaction D-maltose(out) + ATP + H2O = D-maltose(in) + ADP + phosphate + H(+). In terms of biological role, part of the ABC transporter complex MalEFGK involved in maltose/maltodextrin import. Responsible for energy coupling to the transport system. The polypeptide is Maltose/maltodextrin import ATP-binding protein MalK (Yersinia pestis bv. Antiqua (strain Antiqua)).